Consider the following 119-residue polypeptide: Large ribosomal subunit protein uL18 (119 aa).

This sequence belongs to the universal ribosomal protein uL18 family. In terms of assembly, part of the 50S ribosomal subunit; part of the 5S rRNA/L5/L18/L25 subcomplex. Contacts the 5S and 23S rRNAs.

Functionally, this is one of the proteins that bind and probably mediate the attachment of the 5S RNA into the large ribosomal subunit, where it forms part of the central protuberance. The polypeptide is Large ribosomal subunit protein uL18 (Xanthomonas oryzae pv. oryzae (strain MAFF 311018)).